The primary structure comprises 535 residues: Probable C4-dicarboxylate sensor kinase (535 aa).

The Cytoplasmic segment spans residues 1 to 11; it reads MNKKKLSIRWK. A helical membrane pass occupies residues 12–32; that stretch reads ITILSYILVIFSFLIGGIVLI. The Extracellular portion of the chain corresponds to 33–172; it reads GNIQHTEERE…IADILLHLKR (140 aa). A helical membrane pass occupies residues 173–193; the sequence is DIAFIVVLTLGFGLAGSFLLA. Topologically, residues 194 to 535 are cytoplasmic; the sequence is RHIKKQMFQL…MKGEEAQHGS (342 aa). Residues 213–276 enclose the PAS domain; sequence EERTATFHSM…PEIVERNKAV (64 aa). The region spanning 333 to 528 is the Histidine kinase domain; the sequence is VQNHEHMNKL…SFSIVFPMKG (196 aa). A Phosphohistidine; by autocatalysis modification is found at H336.

The protein resides in the cell membrane. It carries out the reaction ATP + protein L-histidine = ADP + protein N-phospho-L-histidine.. In terms of biological role, member of the two-component regulatory system DctS/DctR. Probably activates DctR by phosphorylation. Essential for expression of dctP. The polypeptide is Probable C4-dicarboxylate sensor kinase (dctS) (Bacillus subtilis (strain 168)).